An 835-amino-acid polypeptide reads, in one-letter code: Ribonucleoside-diphosphate reductase large subunit (835 aa).

Substrate is bound by residues Ser222, 237–238 (SC), Gly266, 447–451 (NLCCE), and 660–664 (PSASS). Cys238 and Cys464 are disulfide-bonded. Catalysis depends on Asn447, which acts as the Proton acceptor. Cys449 (cysteine radical intermediate) is an active-site residue. The active-site Proton acceptor is Glu451.

Belongs to the ribonucleoside diphosphate reductase large chain family. As to quaternary structure, heterotetramer composed of a homodimer of the large subunit (R1) and a homodimer of the small subunit (R2). Larger multisubunit protein complex are also active, composed of (R1)n(R2)n.

The catalysed reaction is a 2'-deoxyribonucleoside 5'-diphosphate + [thioredoxin]-disulfide + H2O = a ribonucleoside 5'-diphosphate + [thioredoxin]-dithiol. Ribonucleoside-diphosphate reductase holoenzyme provides the precursors necessary for viral DNA synthesis. Allows virus growth in non-dividing cells. Catalyzes the biosynthesis of deoxyribonucleotides from the corresponding ribonucleotides. This chain is Ribonucleoside-diphosphate reductase large subunit, found in Magallana gigas (Pacific oyster).